The chain runs to 232 residues: tRNA (guanine-N(1)-)-methyltransferase (232 aa).

Residues Gly111 and 131 to 136 (IGDYIL) each bind S-adenosyl-L-methionine.

Belongs to the RNA methyltransferase TrmD family. In terms of assembly, homodimer.

It is found in the cytoplasm. It carries out the reaction guanosine(37) in tRNA + S-adenosyl-L-methionine = N(1)-methylguanosine(37) in tRNA + S-adenosyl-L-homocysteine + H(+). Its function is as follows. Specifically methylates guanosine-37 in various tRNAs. The polypeptide is tRNA (guanine-N(1)-)-methyltransferase (Bartonella bacilliformis (strain ATCC 35685 / KC583 / Herrer 020/F12,63)).